The primary structure comprises 102 residues: Large ribosomal subunit protein eL30 (102 aa).

This sequence belongs to the eukaryotic ribosomal protein eL30 family. Part of the 50S ribosomal subunit.

This Thermococcus kodakarensis (strain ATCC BAA-918 / JCM 12380 / KOD1) (Pyrococcus kodakaraensis (strain KOD1)) protein is Large ribosomal subunit protein eL30.